A 59-amino-acid chain; its full sequence is MSAELKITLVRSHIGTTSKQRAVLNGLGLTKVNKTVVLKNTPEIVGMVQKVAHMVKVVE.

Belongs to the universal ribosomal protein uL30 family. As to quaternary structure, part of the 50S ribosomal subunit.

This chain is Large ribosomal subunit protein uL30, found in Geobacter sulfurreducens (strain ATCC 51573 / DSM 12127 / PCA).